The following is a 387-amino-acid chain: 4-hydroxy-3-methylbut-2-en-1-yl diphosphate synthase (flavodoxin) (387 aa).

[4Fe-4S] cluster-binding residues include cysteine 272, cysteine 275, cysteine 307, and glutamate 314.

It belongs to the IspG family. [4Fe-4S] cluster serves as cofactor.

The enzyme catalyses (2E)-4-hydroxy-3-methylbut-2-enyl diphosphate + oxidized [flavodoxin] + H2O + 2 H(+) = 2-C-methyl-D-erythritol 2,4-cyclic diphosphate + reduced [flavodoxin]. It participates in isoprenoid biosynthesis; isopentenyl diphosphate biosynthesis via DXP pathway; isopentenyl diphosphate from 1-deoxy-D-xylulose 5-phosphate: step 5/6. Functionally, converts 2C-methyl-D-erythritol 2,4-cyclodiphosphate (ME-2,4cPP) into 1-hydroxy-2-methyl-2-(E)-butenyl 4-diphosphate. In Granulibacter bethesdensis (strain ATCC BAA-1260 / CGDNIH1), this protein is 4-hydroxy-3-methylbut-2-en-1-yl diphosphate synthase (flavodoxin).